We begin with the raw amino-acid sequence, 450 residues long: Solute carrier family 52, riboflavin transporter, member 2 (450 aa).

The next 5 helical transmembrane spans lie at 14-34 (LLVA…WVEL), 47-67 (LPSY…LVTL), 86-106 (GLGI…APVA), 112-132 (VAFL…NVTF), and 147-167 (FFLG…GQGV). An N-linked (GlcNAc...) asparagine glycan is attached at N178. Residues 201–221 (FFWVLTALLGTSAAAFQGLLL) form a helical membrane-spanning segment. Positions 227–236 (TSEPTTGTGL) are enriched in low complexity. The tract at residues 227–264 (TSEPTTGTGLRVETPGTEEEEEEEEASPLQEPPGQVAG) is disordered. The span at 242-252 (GTEEEEEEEEA) shows a compositional bias: acidic residues. The next 5 membrane-spanning stretches (helical) occupy residues 282-302 (ACLL…LPAV), 317-337 (LAVV…MAVL), 344-364 (LCGL…LAAL), 369-389 (PLVG…LCAG), and 409-429 (ALLA…VAMF).

This sequence belongs to the riboflavin transporter family.

It localises to the cell membrane. It catalyses the reaction riboflavin(in) = riboflavin(out). With respect to regulation, riboflavin transport is Na(+)-independent but moderately pH-sensitive. Activity is strongly inhibited by riboflavin analogs, such as lumiflavin. Weakly inhibited by flavin adenine dinucleotide (FAD) and flavin mononucleotide (FMN). Functionally, plasma membrane transporter mediating the uptake by cells of the water soluble vitamin B2/riboflavin that plays a key role in biochemical oxidation-reduction reactions of the carbohydrate, lipid, and amino acid metabolism. May also act as a receptor for 4-hydroxybutyrate. The polypeptide is Solute carrier family 52, riboflavin transporter, member 2 (Slc52a2) (Mus musculus (Mouse)).